The sequence spans 571 residues: Protein tesmin/TSO1-like CXC 6 (571 aa).

5 disordered regions span residues 1–52 (MGEG…AAAS), 92–119 (IRHP…QKKK), 293–325 (NQGT…GGNA), 370–411 (LANQ…RSLS), and 507–571 (NGVS…KKDL). Over residues 7 to 16 (GDKFPPKTDE) the composition is skewed to basic and acidic residues. Positions 117 to 241 (KKKQCNCKHS…KCLDCKNFEG (125 aa)) constitute a CRC domain. Composition is skewed to polar residues over residues 293–319 (NQGT…QTGS), 373–388 (QKET…QGHV), and 508–539 (GVSQ…QTAK). Over residues 540–557 (QPSQLTTTTTTPNTSSQT) the composition is skewed to low complexity.

The protein belongs to the lin-54 family. Ubiquitous but expressed mostly in flowers.

The protein localises to the nucleus. Its function is as follows. Plays a role in development of both male and female reproductive tissues. This chain is Protein tesmin/TSO1-like CXC 6 (TCX6), found in Arabidopsis thaliana (Mouse-ear cress).